A 338-amino-acid chain; its full sequence is 4-hydroxy-2-oxovalerate aldolase (338 aa).

The region spanning Pro-4 to Met-254 is the Pyruvate carboxyltransferase domain. Substrate is bound at residue Arg-12–Asp-13. Asp-13 provides a ligand contact to Mn(2+). Catalysis depends on His-16, which acts as the Proton acceptor. Positions 166 and 193 each coordinate substrate. The Mn(2+) site is built by His-193 and His-195. Tyr-284 lines the substrate pocket.

Belongs to the 4-hydroxy-2-oxovalerate aldolase family.

It catalyses the reaction (S)-4-hydroxy-2-oxopentanoate = acetaldehyde + pyruvate. In Roseiflexus sp. (strain RS-1), this protein is 4-hydroxy-2-oxovalerate aldolase.